The sequence spans 353 residues: Bone morphogenetic protein 2 (353 aa).

A propeptide spanning residues 1 to 239 (GSLKRPEDLL…GHPLHKREKR (239 aa)) is cleaved from the precursor. Residues N91, N121, and N157 are each glycosylated (N-linked (GlcNAc...) asparagine). A disordered region spans residues 228 to 248 (GKGHPLHKREKRQAKHKQRKR). Over residues 231 to 248 (HPLHKREKRQAKHKQRKR) the composition is skewed to basic residues. Intrachain disulfides connect C253–C318, C282–C350, and C286–C352. N295 carries an N-linked (GlcNAc...) asparagine glycan.

This sequence belongs to the TGF-beta family. As to quaternary structure, homodimer; disulfide-linked.

The protein resides in the secreted. Functionally, negatively regulates the structure and function of the limb apical ectodermal ridge. This chain is Bone morphogenetic protein 2 (BMP2), found in Gallus gallus (Chicken).